Here is a 417-residue protein sequence, read N- to C-terminus: Peptidyl-Asp metalloendopeptidase (417 aa).

The first 25 residues, 1 to 25 (MLSRSIGKAAGGLVLGLSVAAAAHA), serve as a signal peptide directing secretion. Histidine 327 serves as a coordination point for Zn(2+). Residue glutamate 328 is part of the active site. Zn(2+)-binding residues include histidine 331 and histidine 337.

It belongs to the peptidase M72 family. Zn(2+) is required as a cofactor.

The catalysed reaction is Cleavage of Xaa-|-Asp, Xaa-|-Glu and Xaa-|-cysteic acid bonds.. Its function is as follows. Metalloprotease, specifically cleaves on the N-terminal side of aspartyl, glutamyl and cysteic acid residues. This chain is Peptidyl-Asp metalloendopeptidase, found in Stenotrophomonas maltophilia (strain K279a).